A 155-amino-acid chain; its full sequence is uncharacterized protein (155 aa).

The tract at residues 1 to 34 is disordered; that stretch reads MESLQTPQHRENQDKREKEYGVKHMPMGNNAGNL. The span at 8-22 shows a compositional bias: basic and acidic residues; it reads QHRENQDKREKEYGV. Residues 115-135 form a helical membrane-spanning segment; sequence MSLLLLPAFSGLTWAPFLFLF.

It is found in the membrane. This is an uncharacterized protein from Homo sapiens (Human).